The following is a 72-amino-acid chain: VIP peptides (72 aa).

Isoleucine 27 carries the post-translational modification Isoleucine amide. Asparagine amide is present on asparagine 72.

Belongs to the glucagon family.

It localises to the secreted. Functionally, VIP is a neuropeptide involved in a diverse array of physiological processes through activating the PACAP subfamily of class B1 G protein-coupled receptors: VIP receptor 1 (VPR1) and VIP receptor 2 (VPR2). Abundantly expressed throughout the CNS and peripheral nervous systems where they primarily exert neuroprotective and immune modulatory roles. Also causes vasodilation, lowers arterial blood pressure, stimulates myocardial contractility, increases glycogenolysis and relaxes the smooth muscle of trachea, stomach and gall bladder. Its function is as follows. PHM-27 is a bioactive form from proteolysis of the same precursor protein, that causes vasodilation. It is a potent agonist of the calcitonin receptor CALCR, with similar efficacy as calcitonin. The protein is VIP peptides (VIP) of Oryctolagus cuniculus (Rabbit).